Reading from the N-terminus, the 234-residue chain is Isoprenyl transferase (234 aa).

The active site involves Asp13. Asp13 contributes to the Mg(2+) binding site. Substrate-binding positions include 14-17 (GNGR), Trp18, Arg26, His30, and 58-60 (STE). Asn61 (proton acceptor) is an active-site residue. Substrate-binding positions include Trp62, Arg64, Arg180, and 186 to 188 (RLS). Glu199 is a Mg(2+) binding site.

It belongs to the UPP synthase family. Homodimer. Requires Mg(2+) as cofactor.

Its function is as follows. Catalyzes the condensation of isopentenyl diphosphate (IPP) with allylic pyrophosphates generating different type of terpenoids. This Helicobacter pylori (strain J99 / ATCC 700824) (Campylobacter pylori J99) protein is Isoprenyl transferase.